A 120-amino-acid polypeptide reads, in one-letter code: NAD(P)H-quinone oxidoreductase subunit 3 (120 aa).

Transmembrane regions (helical) follow at residues 7 to 27 (YEYVLGFLLACSLIPILALTA), 64 to 84 (MFALVFVVFDVETVFLYPWAV), and 89 to 109 (LGLLAFVEALIFIAILVVALV).

This sequence belongs to the complex I subunit 3 family. In terms of assembly, NDH-1 can be composed of about 15 different subunits; different subcomplexes with different compositions have been identified which probably have different functions.

It is found in the cellular thylakoid membrane. It carries out the reaction a plastoquinone + NADH + (n+1) H(+)(in) = a plastoquinol + NAD(+) + n H(+)(out). The catalysed reaction is a plastoquinone + NADPH + (n+1) H(+)(in) = a plastoquinol + NADP(+) + n H(+)(out). Functionally, NDH-1 shuttles electrons from an unknown electron donor, via FMN and iron-sulfur (Fe-S) centers, to quinones in the respiratory and/or the photosynthetic chain. The immediate electron acceptor for the enzyme in this species is believed to be plastoquinone. Couples the redox reaction to proton translocation, and thus conserves the redox energy in a proton gradient. Cyanobacterial NDH-1 also plays a role in inorganic carbon-concentration. This chain is NAD(P)H-quinone oxidoreductase subunit 3, found in Crocosphaera subtropica (strain ATCC 51142 / BH68) (Cyanothece sp. (strain ATCC 51142)).